The primary structure comprises 357 residues: Uroporphyrinogen decarboxylase (357 aa).

Residues 34-38, D83, Y158, S213, and H336 each bind substrate; that span reads RQAGR.

It belongs to the uroporphyrinogen decarboxylase family. As to quaternary structure, homodimer.

The protein resides in the cytoplasm. The catalysed reaction is uroporphyrinogen III + 4 H(+) = coproporphyrinogen III + 4 CO2. The protein operates within porphyrin-containing compound metabolism; protoporphyrin-IX biosynthesis; coproporphyrinogen-III from 5-aminolevulinate: step 4/4. In terms of biological role, catalyzes the decarboxylation of four acetate groups of uroporphyrinogen-III to yield coproporphyrinogen-III. This Mycolicibacterium paratuberculosis (strain ATCC BAA-968 / K-10) (Mycobacterium paratuberculosis) protein is Uroporphyrinogen decarboxylase.